Consider the following 856-residue polypeptide: V-type proton ATPase 116 kDa subunit a 2 (856 aa).

Residues 1 to 393 lie on the Cytoplasmic side of the membrane; that stretch reads MGSLFRSETM…DAYGVGSYRE (393 aa). A helical transmembrane segment spans residues 394 to 412; it reads VNPALFTIITFPFLFAVMF. Residues 413-414 lie on the Vacuolar side of the membrane; sequence GD. A helical transmembrane segment spans residues 415 to 431; it reads FGHGFVMFLFALLLVLN. Topologically, residues 432-445 are cytoplasmic; it reads ENHPRLNQSQEIMR. A helical membrane pass occupies residues 446–475; the sequence is MFFNGRYILLLMGLFSVYTGLIYNDCFSKS. Residues 476-549 are Vacuolar-facing; that stretch reads VNLFGSGWNV…ATNRLTFLNS (74 aa). N-linked (GlcNAc...) asparagine glycosylation is found at Asn-484 and Asn-505. Residues 550–569 form a helical membrane-spanning segment; that stretch reads FKMKMSVILGIIHMTFGVIL. Residues 570 to 587 are Cytoplasmic-facing; that stretch reads GIFNHLHFRKKFNIYLVS. The chain crosses the membrane as a helical span at residues 588-608; sequence IPELLFMLCIFGYLIFMIFYK. Residues 609–651 are Vacuolar-facing; sequence WLVFSAETSRVAPSILIEFINMFLFPASKTSGLYTGQEYVQRV. The helical transmembrane segment at 652 to 671 threads the bilayer; it reads LLVVTALSVPVLFLGKPLFL. Topologically, residues 672–739 are cytoplasmic; it reads LWLHNGRSCF…EILMTQVIHS (68 aa). Phosphoserine is present on residues Ser-695 and Ser-700. The helical transmembrane segment at 740–764 threads the bilayer; that stretch reads IEYCLGCISNTASYLRLWALSLAHA. Over 765–785 the chain is Vacuolar; sequence QLSDVLWAMLMRVGLRVDTTY. A helical transmembrane segment spans residues 786–824; the sequence is GVLLLLPVIALFAVLTIFILLIMEGLSAFLHAIRLHWVE. Topologically, residues 825–856 are cytoplasmic; sequence FQNKFYVGAGTKFVPFSFSLLSSKFNNDDSVA.

This sequence belongs to the V-ATPase 116 kDa subunit family. V-ATPase is a heteromultimeric enzyme made up of two complexes: the ATP-hydrolytic V1 complex and the proton translocation V0 complex. The V1 complex consists of three catalytic AB heterodimers that form a heterohexamer, three peripheral stalks each consisting of EG heterodimers, one central rotor including subunits D and F, and the regulatory subunits C and H. The proton translocation complex V0 consists of the proton transport subunit a, a ring of proteolipid subunits c9c'', rotary subunit d, subunits e and f, and the accessory subunits ATP6AP1/Ac45 and ATP6AP2/PRR. Directly interacts with PSCD2 through its N-terminal cytosolic tail in an intra-endosomal acidification-dependent manner. Disruption of this interaction results in the inhibition of endocytosis. Interacts with SPAAR.

The protein localises to the cell membrane. The protein resides in the endosome membrane. Subunit of the V0 complex of vacuolar(H+)-ATPase (V-ATPase), a multisubunit enzyme composed of a peripheral complex (V1) that hydrolyzes ATP and a membrane integral complex (V0) that translocates protons. V-ATPase is responsible for acidifying and maintaining the pH of intracellular compartments and in some cell types, is targeted to the plasma membrane, where it is responsible for acidifying the extracellular environment. Essential component of the endosomal pH-sensing machinery. May play a role in maintaining the Golgi functions, such as glycosylation maturation, by controlling the Golgi pH. In aerobic conditions, involved in intracellular iron homeostasis, thus triggering the activity of Fe(2+) prolyl hydroxylase (PHD) enzymes, and leading to HIF1A hydroxylation and subsequent proteasomal degradation. The polypeptide is V-type proton ATPase 116 kDa subunit a 2 (ATP6V0A2) (Homo sapiens (Human)).